A 424-amino-acid chain; its full sequence is CinA-like protein (424 aa).

The protein belongs to the CinA family.

The protein is CinA-like protein of Shewanella loihica (strain ATCC BAA-1088 / PV-4).